A 400-amino-acid chain; its full sequence is Formate-dependent phosphoribosylglycinamide formyltransferase (400 aa).

N(1)-(5-phospho-beta-D-ribosyl)glycinamide is bound by residues 22–23 (EL) and Glu82. Residues Arg115, Lys157, 162-167 (SSGKGQ), 197-200 (EGFV), and Glu205 each bind ATP. In terms of domain architecture, ATP-grasp spans 120–315 (RLAAETLGLP…EFELHARAIL (196 aa)). Mg(2+) is bound by residues Glu274 and Glu286. N(1)-(5-phospho-beta-D-ribosyl)glycinamide contacts are provided by residues Asp293, Lys362, and 369–370 (RR).

The protein belongs to the PurK/PurT family. Homodimer.

It catalyses the reaction N(1)-(5-phospho-beta-D-ribosyl)glycinamide + formate + ATP = N(2)-formyl-N(1)-(5-phospho-beta-D-ribosyl)glycinamide + ADP + phosphate + H(+). It participates in purine metabolism; IMP biosynthesis via de novo pathway; N(2)-formyl-N(1)-(5-phospho-D-ribosyl)glycinamide from N(1)-(5-phospho-D-ribosyl)glycinamide (formate route): step 1/1. Its function is as follows. Involved in the de novo purine biosynthesis. Catalyzes the transfer of formate to 5-phospho-ribosyl-glycinamide (GAR), producing 5-phospho-ribosyl-N-formylglycinamide (FGAR). Formate is provided by PurU via hydrolysis of 10-formyl-tetrahydrofolate. In Mycolicibacterium gilvum (strain PYR-GCK) (Mycobacterium gilvum (strain PYR-GCK)), this protein is Formate-dependent phosphoribosylglycinamide formyltransferase.